Reading from the N-terminus, the 130-residue chain is Glycine cleavage system H protein (130 aa).

A Lipoyl-binding domain is found at 25-107 (IATIGITEFA…YGEGWFLKVR (83 aa)). Lysine 66 is modified (N6-lipoyllysine).

Belongs to the GcvH family. In terms of assembly, the glycine cleavage system is composed of four proteins: P, T, L and H. Requires (R)-lipoate as cofactor.

Functionally, the glycine cleavage system catalyzes the degradation of glycine. The H protein shuttles the methylamine group of glycine from the P protein to the T protein. The sequence is that of Glycine cleavage system H protein from Nostoc sp. (strain PCC 7120 / SAG 25.82 / UTEX 2576).